The chain runs to 386 residues: Methionyl-tRNA formyltransferase, mitochondrial (386 aa).

This sequence belongs to the Fmt family.

The protein localises to the mitochondrion. The enzyme catalyses L-methionyl-tRNA(fMet) + (6R)-10-formyltetrahydrofolate = N-formyl-L-methionyl-tRNA(fMet) + (6S)-5,6,7,8-tetrahydrofolate + H(+). Functionally, methionyl-tRNA formyltransferase that formylates methionyl-tRNA in mitochondria and is crucial for translation initiation. This Mus musculus (Mouse) protein is Methionyl-tRNA formyltransferase, mitochondrial (Mtfmt).